The primary structure comprises 1087 residues: Alpha-mannosidase G (1087 aa).

Histidine 264, aspartate 266, aspartate 376, and histidine 579 together coordinate Zn(2+). Catalysis depends on aspartate 376, which acts as the Nucleophile.

The protein belongs to the glycosyl hydrolase 38 family. Requires Zn(2+) as cofactor.

The catalysed reaction is Hydrolysis of terminal, non-reducing alpha-D-mannose residues in alpha-D-mannosides.. In Dictyostelium discoideum (Social amoeba), this protein is Alpha-mannosidase G (manG).